Reading from the N-terminus, the 311-residue chain is Protoheme IX farnesyltransferase (311 aa).

8 consecutive transmembrane segments (helical) span residues 39-59, 61-81, 111-131, 133-153, 162-182, 187-207, 246-266, and 287-307; these read LLAMAAGLSLALYVTGIPIGE, LPEILFAIFGSAFVIGAAGAF, ALVLGISLSLLGLLLLGVASP, AALFGFLGLFLYVVPYTMWSK, IGSVGGAVPPLIGWAAISGDL, IIGLFVVTVLWQMPHFYAIAI, FFFVSLSWFITIVALVLSLIW, and FVFSLNYLTILFTVIIGFSLL.

This sequence belongs to the UbiA prenyltransferase family. Protoheme IX farnesyltransferase subfamily. As to quaternary structure, interacts with CtaA.

Its subcellular location is the cell membrane. The catalysed reaction is heme b + (2E,6E)-farnesyl diphosphate + H2O = Fe(II)-heme o + diphosphate. The protein operates within porphyrin-containing compound metabolism; heme O biosynthesis; heme O from protoheme: step 1/1. Converts heme B (protoheme IX) to heme O by substitution of the vinyl group on carbon 2 of heme B porphyrin ring with a hydroxyethyl farnesyl side group. The chain is Protoheme IX farnesyltransferase from Shouchella clausii (strain KSM-K16) (Alkalihalobacillus clausii).